Consider the following 296-residue polypeptide: Ribonuclease HIII (296 aa).

In terms of domain architecture, RNase H type-2 spans 80 to 296 (LALIGSDEVG…NTKKAYQRLK (217 aa)). Residues D86, E87, and D191 each contribute to the a divalent metal cation site.

It belongs to the RNase HII family. RnhC subfamily. Mn(2+) is required as a cofactor. The cofactor is Mg(2+).

The protein resides in the cytoplasm. The enzyme catalyses Endonucleolytic cleavage to 5'-phosphomonoester.. Functionally, endonuclease that specifically degrades the RNA of RNA-DNA hybrids. The polypeptide is Ribonuclease HIII (Streptococcus thermophilus (strain CNRZ 1066)).